The primary structure comprises 445 residues: Argininosuccinate synthase (445 aa).

ATP-binding positions include 17–25 (AFSGGLDTS) and Ala-43. Position 99 (Tyr-99) interacts with L-citrulline. Gly-129 and Thr-131 together coordinate ATP. L-aspartate is bound by residues Thr-131, Asn-135, and Asp-136. Asn-135 is a binding site for L-citrulline. Asp-136 contributes to the ATP binding site. The L-citrulline site is built by Arg-139 and Ser-192. Asp-194 is a binding site for ATP. L-citrulline-binding residues include Thr-201, Glu-203, and Glu-280.

Belongs to the argininosuccinate synthase family. Type 2 subfamily. Homotetramer.

The protein localises to the cytoplasm. The enzyme catalyses L-citrulline + L-aspartate + ATP = 2-(N(omega)-L-arginino)succinate + AMP + diphosphate + H(+). It functions in the pathway amino-acid biosynthesis; L-arginine biosynthesis; L-arginine from L-ornithine and carbamoyl phosphate: step 2/3. This chain is Argininosuccinate synthase, found in Burkholderia ambifaria (strain MC40-6).